Here is a 140-residue protein sequence, read N- to C-terminus: Nucleoside diphosphate kinase (140 aa).

Residues Lys11, Phe59, Arg87, Thr93, Arg104, and Asn114 each coordinate ATP. The active-site Pros-phosphohistidine intermediate is the His117.

Belongs to the NDK family. Homotetramer. The cofactor is Mg(2+).

The protein resides in the cytoplasm. It carries out the reaction a 2'-deoxyribonucleoside 5'-diphosphate + ATP = a 2'-deoxyribonucleoside 5'-triphosphate + ADP. It catalyses the reaction a ribonucleoside 5'-diphosphate + ATP = a ribonucleoside 5'-triphosphate + ADP. Functionally, major role in the synthesis of nucleoside triphosphates other than ATP. The ATP gamma phosphate is transferred to the NDP beta phosphate via a ping-pong mechanism, using a phosphorylated active-site intermediate. This is Nucleoside diphosphate kinase from Francisella tularensis subsp. holarctica (strain LVS).